The following is a 170-amino-acid chain: Adenine phosphoribosyltransferase (170 aa).

It belongs to the purine/pyrimidine phosphoribosyltransferase family. In terms of assembly, homodimer.

It localises to the cytoplasm. The enzyme catalyses AMP + diphosphate = 5-phospho-alpha-D-ribose 1-diphosphate + adenine. The protein operates within purine metabolism; AMP biosynthesis via salvage pathway; AMP from adenine: step 1/1. Its function is as follows. Catalyzes a salvage reaction resulting in the formation of AMP, that is energically less costly than de novo synthesis. The polypeptide is Adenine phosphoribosyltransferase (Fusobacterium nucleatum subsp. nucleatum (strain ATCC 25586 / DSM 15643 / BCRC 10681 / CIP 101130 / JCM 8532 / KCTC 2640 / LMG 13131 / VPI 4355)).